The chain runs to 497 residues: Glycerol kinase (497 aa).

Thr-12 is a binding site for ADP. ATP-binding residues include Thr-12, Thr-13, and Ser-14. Thr-12 is a binding site for sn-glycerol 3-phosphate. Arg-16 is an ADP binding site. Residues Arg-82, Glu-83, Tyr-134, and Asp-243 each coordinate sn-glycerol 3-phosphate. 5 residues coordinate glycerol: Arg-82, Glu-83, Tyr-134, Asp-243, and Gln-244. The ADP site is built by Thr-265 and Gly-308. 4 residues coordinate ATP: Thr-265, Gly-308, Gln-312, and Gly-411. Position 411 (Gly-411) interacts with ADP.

The protein belongs to the FGGY kinase family.

The enzyme catalyses glycerol + ATP = sn-glycerol 3-phosphate + ADP + H(+). Its pathway is polyol metabolism; glycerol degradation via glycerol kinase pathway; sn-glycerol 3-phosphate from glycerol: step 1/1. With respect to regulation, inhibited by fructose 1,6-bisphosphate (FBP). Key enzyme in the regulation of glycerol uptake and metabolism. Catalyzes the phosphorylation of glycerol to yield sn-glycerol 3-phosphate. This Sinorhizobium fredii (strain NBRC 101917 / NGR234) protein is Glycerol kinase.